Here is a 438-residue protein sequence, read N- to C-terminus: 2-(3-amino-3-carboxypropyl)histidine synthase subunit 1 (438 aa).

The interval 1-24 is disordered; it reads MAALVVSETAEPGSRVGPGRGRIS. Positions 110, 214, and 342 each coordinate [4Fe-4S] cluster. The segment at 402-438 is disordered; sequence LCQPASDKVQQGSRGGSPAPACESCNCADQKATSPAP. The residue at position 418 (serine 418) is a Phosphoserine.

It belongs to the DPH1/DPH2 family. DPH1 subfamily. Component of the 2-(3-amino-3-carboxypropyl)histidine synthase complex composed of DPH1, DPH2, DPH3 and a NADH-dependent reductase. Interacts with DPH2. Interacts with RBM8A. It depends on [4Fe-4S] cluster as a cofactor. Strongly expressed in kidney and liver. Moderately expressed in brain, skin and testis. Weakly expressed in heart, lung, small intestine, spleen, stomach and thymus.

The protein localises to the nucleus. It is found in the cytoplasm. It catalyses the reaction L-histidyl-[translation elongation factor 2] + S-adenosyl-L-methionine = 2-[(3S)-amino-3-carboxypropyl]-L-histidyl-[translation elongation factor 2] + S-methyl-5'-thioadenosine + H(+). It participates in protein modification; peptidyl-diphthamide biosynthesis. Catalyzes the first step of diphthamide biosynthesis, a post-translational modification of histidine which occurs in elongation factor 2. DPH1 and DPH2 transfer a 3-amino-3-carboxypropyl (ACP) group from S-adenosyl-L-methionine (SAM) to a histidine residue, the reaction is assisted by a reduction system comprising DPH3 and a NADH-dependent reductase. Acts as a tumor suppressor. The polypeptide is 2-(3-amino-3-carboxypropyl)histidine synthase subunit 1 (Mus musculus (Mouse)).